Here is an 89-residue protein sequence, read N- to C-terminus: Small ribosomal subunit protein uS15 (89 aa).

Belongs to the universal ribosomal protein uS15 family. As to quaternary structure, part of the 30S ribosomal subunit. Forms a bridge to the 50S subunit in the 70S ribosome, contacting the 23S rRNA.

In terms of biological role, one of the primary rRNA binding proteins, it binds directly to 16S rRNA where it helps nucleate assembly of the platform of the 30S subunit by binding and bridging several RNA helices of the 16S rRNA. Its function is as follows. Forms an intersubunit bridge (bridge B4) with the 23S rRNA of the 50S subunit in the ribosome. The sequence is that of Small ribosomal subunit protein uS15 from Bifidobacterium animalis subsp. lactis (strain AD011).